Consider the following 460-residue polypeptide: GTPase Der (460 aa).

2 EngA-type G domains span residues 2 to 164 (QSII…HEEF) and 196 to 368 (IRVG…ENFT). GTP is bound by residues 8 to 15 (GKPNVGKS), 55 to 59 (DSGGL), 116 to 119 (NKVD), 202 to 209 (GRVNVGKS), 249 to 253 (DTAGI), and 313 to 316 (NKWD). The 85-residue stretch at 369 to 453 (QKIQTSKLNT…PLVIASRKKG (85 aa)) folds into the KH-like domain.

It belongs to the TRAFAC class TrmE-Era-EngA-EngB-Septin-like GTPase superfamily. EngA (Der) GTPase family. In terms of assembly, associates with the 50S ribosomal subunit.

In terms of biological role, GTPase that plays an essential role in the late steps of ribosome biogenesis. The chain is GTPase Der from Campylobacter jejuni subsp. jejuni serotype O:6 (strain 81116 / NCTC 11828).